The primary structure comprises 148 residues: L-alanine exporter AlaE (148 aa).

4 helical membrane-spanning segments follow: residues Phe-18 to Met-38, Val-49 to Ile-69, Leu-88 to Ala-108, and Thr-115 to Leu-135.

Belongs to the AlaE exporter family.

The protein resides in the cell inner membrane. In terms of biological role, exports L-alanine. The polypeptide is L-alanine exporter AlaE (Yersinia enterocolitica subsp. palearctica serotype O:3 (strain DSM 13030 / CIP 106945 / Y11)).